A 317-amino-acid polypeptide reads, in one-letter code: Acetyl-coenzyme A carboxylase carboxyl transferase subunit alpha (317 aa).

The region spanning 37–291 (KLQEKVDKLL…GNAIEDALDD (255 aa)) is the CoA carboxyltransferase C-terminal domain.

It belongs to the AccA family. As to quaternary structure, acetyl-CoA carboxylase is a heterohexamer composed of biotin carboxyl carrier protein (AccB), biotin carboxylase (AccC) and two subunits each of ACCase subunit alpha (AccA) and ACCase subunit beta (AccD).

The protein localises to the cytoplasm. It carries out the reaction N(6)-carboxybiotinyl-L-lysyl-[protein] + acetyl-CoA = N(6)-biotinyl-L-lysyl-[protein] + malonyl-CoA. It functions in the pathway lipid metabolism; malonyl-CoA biosynthesis; malonyl-CoA from acetyl-CoA: step 1/1. In terms of biological role, component of the acetyl coenzyme A carboxylase (ACC) complex. First, biotin carboxylase catalyzes the carboxylation of biotin on its carrier protein (BCCP) and then the CO(2) group is transferred by the carboxyltransferase to acetyl-CoA to form malonyl-CoA. The chain is Acetyl-coenzyme A carboxylase carboxyl transferase subunit alpha from Rhodospirillum centenum (strain ATCC 51521 / SW).